The following is a 579-amino-acid chain: Protein PLASTID MOVEMENT IMPAIRED 15 (579 aa).

4 coiled-coil regions span residues 90 to 161 (EVLK…NEEH), 188 to 216 (KVLD…IEIE), 383 to 419 (QKTK…KLES), and 481 to 501 (LMKT…EERE).

Belongs to the WEB family.

Required for the chloroplast avoidance response under high intensity blue light. This avoidance response consists in the relocation of chloroplasts on the anticlinal side of exposed cells. The chain is Protein PLASTID MOVEMENT IMPAIRED 15 (PMI15) from Arabidopsis thaliana (Mouse-ear cress).